Consider the following 800-residue polypeptide: Protein translocase subunit SecA (800 aa).

ATP is bound by residues Gln85, 103 to 107, and Asp504; that span reads GEGKT.

Belongs to the SecA family. In terms of assembly, monomer and homodimer. Part of the essential Sec protein translocation apparatus which comprises SecA, SecYEG and auxiliary proteins SecDF. Other proteins may also be involved.

It localises to the cell membrane. The protein localises to the cytoplasm. It carries out the reaction ATP + H2O + cellular proteinSide 1 = ADP + phosphate + cellular proteinSide 2.. Part of the Sec protein translocase complex. Interacts with the SecYEG preprotein conducting channel. Has a central role in coupling the hydrolysis of ATP to the transfer of proteins into and across the cell membrane, serving as an ATP-driven molecular motor driving the stepwise translocation of polypeptide chains across the membrane. The polypeptide is Protein translocase subunit SecA (Lactobacillus delbrueckii subsp. bulgaricus (strain ATCC 11842 / DSM 20081 / BCRC 10696 / JCM 1002 / NBRC 13953 / NCIMB 11778 / NCTC 12712 / WDCM 00102 / Lb 14)).